A 295-amino-acid chain; its full sequence is G1/S-specific cyclin-D1 (295 aa).

A Cyclin N-terminal domain is found at 28-152 (LRAMLKTEET…LLVNKLKWNL (125 aa)). Lysine 269 participates in a covalent cross-link: Glycyl lysine isopeptide (Lys-Gly) (interchain with G-Cter in ubiquitin). The tract at residues 269–295 (KATEEEGEVEEEAGLACTPTDVRDVDI) is disordered. Threonine 286 is modified (phosphothreonine).

Belongs to the cyclin family. Cyclin D subfamily. As to quaternary structure, interacts with either CDK4 or CDK6 protein kinase to form a serine/threonine kinase holoenzyme complex. The cyclin subunit imparts substrate specificity to the complex. Component of the ternary complex CCND1/CDK4/CDKN1B required for nuclear translocation and modulation of CDK4-mediated kinase activity. Interacts directly with CDKN1B. Can form similar complexes with either CDKN1A or CDKN2A. Interacts with UHRF2; the interaction ubiquitinates CCND1 and appears to occur independently of phosphorylation. Interacts with USP2. Interacts (via cyclin N-terminal domain) with INSM1 (via N-terminal region); the interaction competes with the binding of CCND1 to CDK4 during cell cycle progression and inhibits CDK4 activity. Interacts with CDK4; the interaction is prevented with the binding of CCND1 to INSM1 during cell cycle progression. Phosphorylation at Thr-286 by MAP kinases is required for ubiquitination and degradation by the DCX(AMBRA1) complex. It also plays an essential role for recognition by the FBXO31 component of SCF (SKP1-cullin-F-box) protein ligase complex following DNA damage. In terms of processing, ubiquitinated at Lys-269 by the DCX(AMBRA1) complex during the transition from G1 to S cell phase, leading to its degradation: ubiquitination is dependent on Thr-286 phosphorylation. The DCX(AMBRA1) complex represents the major regulator of CCND1 stability during the G1/S transition. Also ubiquitinated by the SCF(FBXO4) and Cul7-RING(FBXW8) ubiquitin-protein ligase complexes. Following DNA damage it is ubiquitinated by the SCF(FBXO31) protein ligase complex. SCF(FBXO31) ubiquitination is dependent on Thr-286 phosphorylation. Ubiquitinated also by UHRF2 apparently in a phosphorylation-independent manner. Ubiquitination leads to its degradation and G1 arrest. Deubiquitinated by USP2; leading to its stabilization.

Its subcellular location is the nucleus. The protein localises to the cytoplasm. The protein resides in the nucleus membrane. In terms of biological role, regulatory component of the cyclin D1-CDK4 (DC) complex that phosphorylates and inhibits members of the retinoblastoma (RB) protein family including RB1 and regulates the cell-cycle during G(1)/S transition. Phosphorylation of RB1 allows dissociation of the transcription factor E2F from the RB/E2F complex and the subsequent transcription of E2F target genes which are responsible for the progression through the G(1) phase. Hypophosphorylates RB1 in early G(1) phase. Cyclin D-CDK4 complexes are major integrators of various mitogenenic and antimitogenic signals. Also a substrate for SMAD3, phosphorylating SMAD3 in a cell-cycle-dependent manner and repressing its transcriptional activity. Component of the ternary complex, cyclin D1/CDK4/CDKN1B, required for nuclear translocation and activity of the cyclin D-CDK4 complex. Exhibits transcriptional corepressor activity with INSM1 on the NEUROD1 and INS promoters in a cell cycle-independent manner. This Rattus norvegicus (Rat) protein is G1/S-specific cyclin-D1 (Ccnd1).